Here is a 479-residue protein sequence, read N- to C-terminus: Heparin cofactor 2 (479 aa).

Positions 1 to 23 (MKHPAYTLLLSLIMSMCAGSKGL) are cleaved as a signal peptide. A glycan (N-linked (GlcNAc...) asparagine) is linked at Asn-31. Repeat copies occupy residues 55-65 (GEEDDDYLDLE) and 69-79 (SEDDDYIYVVD). The interval 55 to 79 (GEEDDDYLDLEKLLSEDDDYIYVVD) is 2 X 11 AA approximate repeats, Asp/Glu-rich (acidic) (hirudin-like). Tyr-61 and Tyr-74 each carry sulfotyrosine. Asn-168 carries N-linked (GlcNAc...) asparagine glycosylation. The tract at residues 172 to 192 (KYEVTTIHNLFRKLTHRLFRR) is glycosaminoglycan-binding site. N-linked (GlcNAc...) asparagine glycans are attached at residues Asn-367 and Asn-403.

The protein belongs to the serpin family. Different composition of the N-linked oligosaccharides appears to yield a 68-kDa and a 72-kDa form.

In terms of biological role, thrombin inhibitor activated by the glycosaminoglycans, heparin or dermatan sulfate. In the presence of the latter, HC-II becomes the predominant thrombin inhibitor in place of antithrombin III (AT). The chain is Heparin cofactor 2 (Serpind1) from Rattus norvegicus (Rat).